We begin with the raw amino-acid sequence, 946 residues long: Protein translocase subunit SecA (946 aa).

ATP-binding positions include Gln87, Gly105–Thr109, and Asp524. The segment at Ala905–Arg926 is disordered. Zn(2+) contacts are provided by Cys930, Cys932, Cys941, and His942.

Belongs to the SecA family. As to quaternary structure, monomer and homodimer. Part of the essential Sec protein translocation apparatus which comprises SecA, SecYEG and auxiliary proteins SecDF-YajC and YidC. Zn(2+) is required as a cofactor.

It localises to the cell inner membrane. Its subcellular location is the cytoplasm. The enzyme catalyses ATP + H2O + cellular proteinSide 1 = ADP + phosphate + cellular proteinSide 2.. Functionally, part of the Sec protein translocase complex. Interacts with the SecYEG preprotein conducting channel. Has a central role in coupling the hydrolysis of ATP to the transfer of proteins into and across the cell membrane, serving both as a receptor for the preprotein-SecB complex and as an ATP-driven molecular motor driving the stepwise translocation of polypeptide chains across the membrane. This Bradyrhizobium diazoefficiens (strain JCM 10833 / BCRC 13528 / IAM 13628 / NBRC 14792 / USDA 110) protein is Protein translocase subunit SecA.